A 472-amino-acid chain; its full sequence is UDP-N-acetylmuramate--L-alanine ligase (472 aa).

121–127 (GTHGKTT) provides a ligand contact to ATP.

It belongs to the MurCDEF family.

It localises to the cytoplasm. The catalysed reaction is UDP-N-acetyl-alpha-D-muramate + L-alanine + ATP = UDP-N-acetyl-alpha-D-muramoyl-L-alanine + ADP + phosphate + H(+). It functions in the pathway cell wall biogenesis; peptidoglycan biosynthesis. Its function is as follows. Cell wall formation. The polypeptide is UDP-N-acetylmuramate--L-alanine ligase (Hahella chejuensis (strain KCTC 2396)).